We begin with the raw amino-acid sequence, 285 residues long: MLYLTKIRNAESEFTENEQKIADFLRANVSELQSVSSRQMAKQLGISQSSIVKFAQKLGAQGFTELRMALIGEYSASREKTNAMALHLHSSITSDDSLEVIARKLNREKELALEQTCALFDYARLQKIIEVISKAPFIQITGLGGSALVGRDLSFKLMKIGYRVACEADTHVQATVSQALKKGDVQIAISYSGSKKEIVLCAEAARKQGATVIAITSLADSPLRRLAHFTLDTVSGETEWRSSSMSTRTAQNSVTDLLFVGLVQLNDVESLKMIQRSSELTQRLK.

Residues Met-1–Ser-77 form the HTH rpiR-type domain. The segment at residues Ser-37 to Gln-56 is a DNA-binding region (H-T-H motif). Residues Ile-128 to Val-268 form the SIS domain.

In terms of assembly, homotetramer.

The protein operates within amino-sugar metabolism; N-acetylmuramate degradation [regulation]. Functionally, represses the expression of the murPQ operon involved in the uptake and degradation of N-acetylmuramic acid (MurNAc). Binds to two adjacent inverted repeats within the operator region. MurNAc 6-phosphate, the substrate of MurQ, is the specific inducer that weakens binding of MurR to the operator. The sequence is that of HTH-type transcriptional regulator MurR from Escherichia coli (strain ATCC 8739 / DSM 1576 / NBRC 3972 / NCIMB 8545 / WDCM 00012 / Crooks).